Consider the following 509-residue polypeptide: H/ACA ribonucleoprotein complex subunit DKC1 (509 aa).

Positions 1-25 (MADAEAAMTFPKKHKKKKERKPLPE) are disordered. Alanine 2 carries the post-translational modification N-acetylalanine. A nucleolar localization region spans residues 2–22 (ADAEAAMTFPKKHKKKKERKP). Residues 11-20 (PKKHKKKKER) show a composition bias toward basic residues. Residues lysine 21, lysine 40, and lysine 44 each participate in a glycyl lysine isopeptide (Lys-Gly) (interchain with G-Cter in SUMO2) cross-link. Aspartate 126 functions as the Nucleophile in the catalytic mechanism. A Glycyl lysine isopeptide (Lys-Gly) (interchain with G-Cter in SUMO2) cross-link involves residue lysine 192. Residues 297–372 (HKRLVMKDSA…VVAKIKRVIM (76 aa)) form the PUA domain. Residues 381-509 (WGLGPKASQK…KARAAEELSG (129 aa)) form a disordered region. Serine 388 is modified (phosphoserine). Glycyl lysine isopeptide (Lys-Gly) (interchain with G-Cter in SUMO2) cross-links involve residues lysine 395 and lysine 425. The span at 416–425 (DYVDYSDSSK) shows a compositional bias: basic and acidic residues. The segment at 447 to 509 (KRKRDSDSDA…KARAAEELSG (63 aa)) is nuclear and nucleolar localization. Residues serine 452 and serine 454 each carry the phosphoserine modification. A Phosphothreonine modification is found at threonine 460. The span at 466–475 (RVKKEKKKKK) shows a compositional bias: basic residues. The span at 481-490 (GEEAAEDGDG) shows a compositional bias: acidic residues. At serine 508 the chain carries Phosphoserine.

It belongs to the pseudouridine synthase TruB family. In terms of assembly, part of the H/ACA small nucleolar ribonucleoprotein (H/ACA snoRNP) complex, which contains NHP2/NOLA2, GAR1/NOLA1, NOP10/NOLA3, and DKC1/NOLA4, which is presumed to be the catalytic subunit. The complex contains a stable core formed by binding of one or two NOP10-DKC1 heterodimers to NHP2; GAR1 subsequently binds to this core via DKC1. The complex binds a box H/ACA small nucleolar RNA (snoRNA), which may target the specific site of modification within the RNA substrate. During assembly, the complex contains NAF1 instead of GAR1/NOLA1. The complex also interacts with TERC, which contains a 3'-terminal domain related to the box H/ACA snoRNAs. Specific interactions with snoRNAs or TERC are mediated by GAR1 and NHP2. Associates with NOLC1/NOPP140. H/ACA snoRNPs interact with the SMN complex, consisting of SMN1 or SMN2, GEMIN2/SIP1, DDX20/GEMIN3, and GEMIN4. This is mediated by interaction between GAR1 and SMN1 or SMN2. The SMN complex may be required for correct assembly of the H/ACA snoRNP complex. Component of the telomerase holoenzyme complex composed of one molecule of TERT, one molecule of WRAP53/TCAB1, two molecules of H/ACA ribonucleoprotein complex subunits DKC1, NOP10, NHP2 and GAR1, and a telomerase RNA template component (TERC). The telomerase holoenzyme complex is associated with TEP1, SMG6/EST1A and POT1. Interacts with SHQ1; this interaction may lead to the stabilization of DKC1, from the time of its synthesis until its association with NOP10, NHP2, and NAF1 at the nascent H/ACA RNA. Interacts with HMBOX1. Interacts with DHX36.

The protein localises to the nucleus. Its subcellular location is the nucleolus. It localises to the cajal body. It catalyses the reaction uridine in 5S rRNA = pseudouridine in 5S rRNA. Functionally, catalytic subunit of H/ACA small nucleolar ribonucleoprotein (H/ACA snoRNP) complex, which catalyzes pseudouridylation of rRNA. This involves the isomerization of uridine such that the ribose is subsequently attached to C5, instead of the normal N1. Each rRNA can contain up to 100 pseudouridine ('psi') residues, which may serve to stabilize the conformation of rRNAs. Required for ribosome biogenesis and telomere maintenance. Also required for correct processing or intranuclear trafficking of TERC, the RNA component of the telomerase reverse transcriptase (TERT) holoenzyme. This is H/ACA ribonucleoprotein complex subunit DKC1 (Dkc1) from Rattus norvegicus (Rat).